Consider the following 331-residue polypeptide: Isopenicillin N synthase (331 aa).

Residues Arg-87, Tyr-91, Ser-183, and Tyr-189 each coordinate isopenicillin N. Residues Arg-87, Tyr-91, Ser-183, Tyr-189, His-214, and Asp-216 each contribute to the N-[(5S)-5-amino-5-carboxypentanoyl]-L-cysteinyl-D-valine site. Positions 176–288 (KKEDALSSVV…RQSLPFFVNL (113 aa)) constitute a Fe2OG dioxygenase domain. Fe(2+)-binding residues include His-214, Asp-216, and His-270. Arg-279 contacts 2-oxoglutarate. Ser-281 serves as a coordination point for isopenicillin N. Ser-281 is an N-[(5S)-5-amino-5-carboxypentanoyl]-L-cysteinyl-D-valine binding site.

Belongs to the iron/ascorbate-dependent oxidoreductase family. As to quaternary structure, monomer. Fe(2+) serves as cofactor.

It is found in the cytoplasm. Its subcellular location is the cytosol. It carries out the reaction N-[(5S)-5-amino-5-carboxypentanoyl]-L-cysteinyl-D-valine + O2 = isopenicillin N + 2 H2O. It functions in the pathway antibiotic biosynthesis; penicillin G biosynthesis; penicillin G from L-alpha-aminoadipate and L-cysteine and L-valine: step 2/3. Its function is as follows. Isopenicillin N synthase; part of the gene cluster that mediates the biosynthesis of penicillin, the world's most important antibiotic. IpnA catalyzes the cyclization of the tripeptide N-[(5S)-5-amino-5-carboxypentanoyl]-L-cysteinyl-D-valine (LLD-ACV or ACV) to form isopenicillin N (IPN) that contains the beta-lactam nucleus. The penicillin biosynthesis occurs via 3 enzymatic steps, the first corresponding to the production of the tripeptide N-[(5S)-5-amino-5-carboxypentanoyl]-L-cysteinyl-D-valine (LLD-ACV or ACV) by the NRPS acvA. The tripeptide ACV is then cyclized to isopenicillin N (IPN) by the isopenicillin N synthase ipnA that forms the beta-lactam nucleus. Finally, the alpha-aminoadipyl side chain is exchanged for phenylacetic acid by the isopenicillin N acyltransferase aatA to yield penicillin in the peroxisomal matrix. The chain is Isopenicillin N synthase from Penicillium chrysogenum (Penicillium notatum).